Consider the following 115-residue polypeptide: Large ribosomal subunit protein bL19 (115 aa).

It belongs to the bacterial ribosomal protein bL19 family.

In terms of biological role, this protein is located at the 30S-50S ribosomal subunit interface and may play a role in the structure and function of the aminoacyl-tRNA binding site. The polypeptide is Large ribosomal subunit protein bL19 (Desulforapulum autotrophicum (strain ATCC 43914 / DSM 3382 / VKM B-1955 / HRM2) (Desulfobacterium autotrophicum)).